The sequence spans 202 residues: Putative 3-methyladenine DNA glycosylase (202 aa).

The protein belongs to the DNA glycosylase MPG family.

The protein is Putative 3-methyladenine DNA glycosylase of Alkaliphilus oremlandii (strain OhILAs) (Clostridium oremlandii (strain OhILAs)).